The primary structure comprises 776 residues: DNA topoisomerase 1 (776 aa).

In terms of domain architecture, Toprim spans methionine 1–valine 111. Residues glutamate 7 and aspartate 80 each coordinate Mg(2+). Residues aspartate 132 to glutamate 568 enclose the Topo IA-type catalytic domain. The interaction with DNA stretch occupies residues serine 166–glutamine 171. The active-site O-(5'-phospho-DNA)-tyrosine intermediate is the tyrosine 304. The C4-type zinc finger occupies cysteine 600–cysteine 627.

This sequence belongs to the type IA topoisomerase family. As to quaternary structure, monomer. It depends on Mg(2+) as a cofactor.

The catalysed reaction is ATP-independent breakage of single-stranded DNA, followed by passage and rejoining.. Functionally, releases the supercoiling and torsional tension of DNA, which is introduced during the DNA replication and transcription, by transiently cleaving and rejoining one strand of the DNA duplex. Introduces a single-strand break via transesterification at a target site in duplex DNA. The scissile phosphodiester is attacked by the catalytic tyrosine of the enzyme, resulting in the formation of a DNA-(5'-phosphotyrosyl)-enzyme intermediate and the expulsion of a 3'-OH DNA strand. The free DNA strand then undergoes passage around the unbroken strand, thus removing DNA supercoils. Finally, in the religation step, the DNA 3'-OH attacks the covalent intermediate to expel the active-site tyrosine and restore the DNA phosphodiester backbone. The chain is DNA topoisomerase 1 from Rickettsia felis (strain ATCC VR-1525 / URRWXCal2) (Rickettsia azadi).